A 236-amino-acid polypeptide reads, in one-letter code: 2,3,4,5-tetrahydropyridine-2,6-dicarboxylate N-acetyltransferase (236 aa).

The protein belongs to the transferase hexapeptide repeat family. DapH subfamily.

It catalyses the reaction (S)-2,3,4,5-tetrahydrodipicolinate + acetyl-CoA + H2O = L-2-acetamido-6-oxoheptanedioate + CoA. Its pathway is amino-acid biosynthesis; L-lysine biosynthesis via DAP pathway; LL-2,6-diaminopimelate from (S)-tetrahydrodipicolinate (acetylase route): step 1/3. Catalyzes the transfer of an acetyl group from acetyl-CoA to tetrahydrodipicolinate. The sequence is that of 2,3,4,5-tetrahydropyridine-2,6-dicarboxylate N-acetyltransferase from Clostridium botulinum (strain Loch Maree / Type A3).